The primary structure comprises 309 residues: UDP-3-O-acyl-N-acetylglucosamine deacetylase (309 aa).

The Zn(2+) site is built by H78, H237, and D241. H264 functions as the Proton donor in the catalytic mechanism.

This sequence belongs to the LpxC family. The cofactor is Zn(2+).

It catalyses the reaction a UDP-3-O-[(3R)-3-hydroxyacyl]-N-acetyl-alpha-D-glucosamine + H2O = a UDP-3-O-[(3R)-3-hydroxyacyl]-alpha-D-glucosamine + acetate. It participates in glycolipid biosynthesis; lipid IV(A) biosynthesis; lipid IV(A) from (3R)-3-hydroxytetradecanoyl-[acyl-carrier-protein] and UDP-N-acetyl-alpha-D-glucosamine: step 2/6. Catalyzes the hydrolysis of UDP-3-O-myristoyl-N-acetylglucosamine to form UDP-3-O-myristoylglucosamine and acetate, the committed step in lipid A biosynthesis. The chain is UDP-3-O-acyl-N-acetylglucosamine deacetylase from Methylobacillus flagellatus (strain ATCC 51484 / DSM 6875 / VKM B-1610 / KT).